The following is a 207-amino-acid chain: Small ribosomal subunit protein uS4 (207 aa).

The tract at residues 31–53 is disordered; the sequence is KAKFDSKPGQHGRTSGARTSDYG. In terms of domain architecture, S4 RNA-binding spans 97–157; the sequence is CRLDNVVYRM…EKSKKQARIV (61 aa).

It belongs to the universal ribosomal protein uS4 family. Part of the 30S ribosomal subunit. Contacts protein S5. The interaction surface between S4 and S5 is involved in control of translational fidelity.

Functionally, one of the primary rRNA binding proteins, it binds directly to 16S rRNA where it nucleates assembly of the body of the 30S subunit. In terms of biological role, with S5 and S12 plays an important role in translational accuracy. This Acidovorax ebreus (strain TPSY) (Diaphorobacter sp. (strain TPSY)) protein is Small ribosomal subunit protein uS4.